Consider the following 775-residue polypeptide: 5-methyltetrahydropteroyltriglutamate--homocysteine methyltransferase (775 aa).

Residues 15–18 (RELK) and K118 each bind 5-methyltetrahydropteroyltri-L-glutamate. Residues 448–450 (IGS) and E501 each bind L-homocysteine. L-methionine-binding positions include 448 to 450 (IGS) and E501. 5-methyltetrahydropteroyltri-L-glutamate contacts are provided by residues 532–533 (RC) and W578. An L-homocysteine-binding site is contributed by D616. D616 serves as a coordination point for L-methionine. Position 622 (E622) interacts with 5-methyltetrahydropteroyltri-L-glutamate. Positions 658, 660, and 682 each coordinate Zn(2+). Residue H711 is the Proton donor of the active site. C743 serves as a coordination point for Zn(2+).

This sequence belongs to the vitamin-B12 independent methionine synthase family. Zn(2+) is required as a cofactor.

The catalysed reaction is 5-methyltetrahydropteroyltri-L-glutamate + L-homocysteine = tetrahydropteroyltri-L-glutamate + L-methionine. Its pathway is amino-acid biosynthesis; L-methionine biosynthesis via de novo pathway; L-methionine from L-homocysteine (MetE route): step 1/1. Its function is as follows. Catalyzes the transfer of a methyl group from 5-methyltetrahydrofolate to homocysteine resulting in methionine formation. The polypeptide is 5-methyltetrahydropteroyltriglutamate--homocysteine methyltransferase (Cytophaga hutchinsonii (strain ATCC 33406 / DSM 1761 / CIP 103989 / NBRC 15051 / NCIMB 9469 / D465)).